The following is a 500-amino-acid chain: NAD(P)H-quinone oxidoreductase chain 4, chloroplastic (500 aa).

Helical transmembrane passes span 4–24, 35–55, 87–107, 113–130, 134–154, 167–187, 208–228, 242–262, 272–292, 305–325, 330–350, 386–406, 411–431, and 462–482; these read FPWL…IFFL, YTIC…CYHF, IGPI…AWPI, LFHF…GSFS, LLLF…LLCM, FILY…GVAL, VLEI…SPII, HYST…YGLI, AHSI…IYAA, IAYS…SLTD, GALL…FLAG, LALP…GIIT, LLIP…LTPI, and LFLS…PDFV.

Belongs to the complex I subunit 4 family.

The protein resides in the plastid. The protein localises to the chloroplast thylakoid membrane. The enzyme catalyses a plastoquinone + NADH + (n+1) H(+)(in) = a plastoquinol + NAD(+) + n H(+)(out). The catalysed reaction is a plastoquinone + NADPH + (n+1) H(+)(in) = a plastoquinol + NADP(+) + n H(+)(out). The protein is NAD(P)H-quinone oxidoreductase chain 4, chloroplastic of Nicotiana tomentosiformis (Tobacco).